The chain runs to 217 residues: Glycerol-3-phosphate acyltransferase (217 aa).

The next 6 membrane-spanning stretches (helical) occupy residues 3-23, 56-76, 78-98, 120-140, 142-162, and 163-183; these read IVIL…VWIG, VLLM…LFGL, GVNP…PIFA, FFIY…MVSL, SMIS…TVPA, and ILPT…TFIF.

This sequence belongs to the PlsY family. Probably interacts with PlsX.

Its subcellular location is the cell membrane. It carries out the reaction an acyl phosphate + sn-glycerol 3-phosphate = a 1-acyl-sn-glycero-3-phosphate + phosphate. The protein operates within lipid metabolism; phospholipid metabolism. Its function is as follows. Catalyzes the transfer of an acyl group from acyl-phosphate (acyl-PO(4)) to glycerol-3-phosphate (G3P) to form lysophosphatidic acid (LPA). This enzyme utilizes acyl-phosphate as fatty acyl donor, but not acyl-CoA or acyl-ACP. The sequence is that of Glycerol-3-phosphate acyltransferase from Enterococcus faecalis (strain ATCC 700802 / V583).